A 46-amino-acid chain; its full sequence is Crambin (46 aa).

3 cysteine pairs are disulfide-bonded: Cys3–Cys40, Cys4–Cys32, and Cys16–Cys26.

The protein belongs to the plant thionin (TC 1.C.44) family.

The protein resides in the secreted. Its function is as follows. The function of this hydrophobic plant seed protein is not known. The polypeptide is Crambin (THI2) (Crambe hispanica subsp. abyssinica (Abyssinian kale)).